A 156-amino-acid polypeptide reads, in one-letter code: Transcription factor MafK (156 aa).

The tract at residues 1 to 21 (MTTNPKPNKALKVKEESGENA) is disordered. Positions 51–76 (RLKQRRRTLKNRGYAASCRIKRVTQK) are basic motif. One can recognise a bZIP domain in the interval 51–114 (RLKQRRRTLK…DALRSKYEAL (64 aa)). The leucine-zipper stretch occupies residues 79–93 (LERQRVELQQEVEKL).

It belongs to the bZIP family. Maf subfamily. In terms of assembly, homodimer or heterodimer.

Its subcellular location is the nucleus. In terms of biological role, since they lack a putative transactivation domain, the small Mafs behave as transcriptional repressors when they dimerize among themselves. However, they act as transcriptional activators by dimerizing with other (usually larger) basic-zipper proteins and recruiting them to specific DNA-binding sites. Small Maf proteins heterodimerize with Fos and may act as competitive repressors of the NF-E2 transcription factor. This Gallus gallus (Chicken) protein is Transcription factor MafK (MAFK).